The following is a 372-amino-acid chain: MTTAPPPLSVLLELTHRCPLACPYCSNPIALAALREEMDTAGWRSLLEQAAEMGVLQAHFSGGEPMLRKDLPELVAHARTLGLYSNLITSGVAGGEPMLDQLQAAGLEHVQLSVQDVDPAGADRIAGYRNSLPKKRDFAAAVRARGLPLTINAVLHRHNAERVPGMIALALEWQAERIEVAHTQYYGWGLRNRAALMPSREQLMATIDAVDTARRELGDSLAIDFVTPDYYARQPKPCMGGWGQRFVNISPRGDVLPCHAAETIEGMRFDNLRERALADIWNNGEAFVRFRGTAWMPEVCQGCPKREIDWGGCRCQALALSGNAATLDPVCERSPAHAQVRATAEREAAAPAPEFIYRRPERPAPATADTLE.

A Radical SAM core domain is found at 4-219; that stretch reads APPPLSVLLE…VDTARRELGD (216 aa). The [4Fe-4S] cluster site is built by Cys18, Cys22, and Cys25. The disordered stretch occupies residues 342 to 372; the sequence is ATAEREAAAPAPEFIYRRPERPAPATADTLE.

This sequence belongs to the radical SAM superfamily. PqqE family. In terms of assembly, interacts with PqqD. The interaction is necessary for activity of PqqE. It depends on [4Fe-4S] cluster as a cofactor.

It catalyses the reaction [PQQ precursor protein] + S-adenosyl-L-methionine = E-Y cross-linked-[PQQ precursor protein] + 5'-deoxyadenosine + L-methionine + H(+). It functions in the pathway cofactor biosynthesis; pyrroloquinoline quinone biosynthesis. Catalyzes the cross-linking of a glutamate residue and a tyrosine residue in the PqqA protein as part of the biosynthesis of pyrroloquinoline quinone (PQQ). The sequence is that of PqqA peptide cyclase from Xanthomonas oryzae pv. oryzae (strain MAFF 311018).